A 428-amino-acid polypeptide reads, in one-letter code: Light-independent protochlorophyllide reductase subunit N (428 aa).

C29, C54, and C115 together coordinate [4Fe-4S] cluster.

Belongs to the BchN/ChlN family. As to quaternary structure, protochlorophyllide reductase is composed of three subunits; BchL, BchN and BchB. Forms a heterotetramer of two BchB and two BchN subunits. The cofactor is [4Fe-4S] cluster.

The catalysed reaction is chlorophyllide a + oxidized 2[4Fe-4S]-[ferredoxin] + 2 ADP + 2 phosphate = protochlorophyllide a + reduced 2[4Fe-4S]-[ferredoxin] + 2 ATP + 2 H2O. Its pathway is porphyrin-containing compound metabolism; bacteriochlorophyll biosynthesis (light-independent). Functionally, component of the dark-operative protochlorophyllide reductase (DPOR) that uses Mg-ATP and reduced ferredoxin to reduce ring D of protochlorophyllide (Pchlide) to form chlorophyllide a (Chlide). This reaction is light-independent. The NB-protein (BchN-BchB) is the catalytic component of the complex. This is Light-independent protochlorophyllide reductase subunit N from Roseobacter denitrificans (strain ATCC 33942 / OCh 114) (Erythrobacter sp. (strain OCh 114)).